Consider the following 1093-residue polypeptide: Regulator of nonsense transcripts 1 homolog (1093 aa).

The disordered stretch occupies residues 42–79 (YGVYGGRGPRGNGRRRHDDDDNETEVLDDDDDESLASV). Residues 61–75 (DDNETEVLDDDDDES) are compositionally biased toward acidic residues. One can recognise a Upf1 CH-rich domain in the interval 95-252 (EKELPPHACA…AKLEEMWKEA (158 aa)). Cys103, Cys106, Cys117, Cys120, Cys125, His135, His139, His145, Cys163, Cys166, Cys189, and Cys193 together coordinate Zn(2+). The interval 103 to 135 (CAYCGIHSPSSVVKCLTCNKWFCSAKGSAFSSH) is C3H. The CC/SHH/C stretch occupies residues 117 to 145 (CLTCNKWFCSAKGSAFSSHIVNHLVRARH). The C4 stretch occupies residues 163-193 (CYNCGTKNVFILGFIPAKSDTVVVLLCRQPC). ATP is bound by residues Gln460, 480-484 (GTGKT), Gln650, Tyr687, and Glu818.

The protein belongs to the DNA2/NAM7 helicase family.

The protein localises to the cytoplasm. It catalyses the reaction ATP + H2O = ADP + phosphate + H(+). RNA-dependent helicase required for nonsense-mediated decay (NMD) of aberrant mRNAs containing premature stop codons and modulates the expression level of normal mRNAs. Also capable of unwinding double-stranded DNA and translocating on single-stranded DNA. The polypeptide is Regulator of nonsense transcripts 1 homolog (Neurospora crassa (strain ATCC 24698 / 74-OR23-1A / CBS 708.71 / DSM 1257 / FGSC 987)).